Consider the following 630-residue polypeptide: Internalin B (630 aa).

An N-terminal signal peptide occupies residues 1–30 (MKEKHNPRRKYCLISGLAIIFSLWIIIGNG). Residues 31–76 (AKVQAETITVSTPIKQIFPDDAFAETIKDNLKKKSVTDAVTQNELN) enclose the LRRNT domain. Positions 49, 51, 55, and 59 each coordinate Ca(2+). 7 LRR repeats span residues 75–97 (LNSI…IQYL), 98–121 (PNVT…NLKN), 123–141 (GWLF…LKDL), 142–163 (KKLK…LVHL), 164–187 (PQLE…RLTK), 189–207 (DTLS…LAGL), and 208–231 (TKLQ…GLKN). An ig-like region region spans residues 241–319 (ECLNKPINHQ…RFHGRVTQPL (79 aa)). In terms of domain architecture, LRRCT spans 241–330 (ECLNKPINHQ…EVYTVSYDVD (90 aa)). Positions 320–392 (KEVYTVSYDV…TLYAVFKAET (73 aa)) are b repeat region. 3 consecutive GW domains span residues 393–467 (TEKT…LDRY), 472–550 (YDKG…TFYK), and 553–630 (MEKP…RAQK). The GW repeat region, necessary and sufficient for cell surface attachment, interacts with host C1QBP and with heparin stretch occupies residues 399–630 (LTRYVKYIRG…TKAANLRAQK (232 aa)).

The protein belongs to the internalin family. Monomer. Interacts via its LRR repeats with the extracellular portion of mammalian host MET; MET can bind HGF, its endogenous ligand, and InlB simultaneously. Probably forms a dimer upon interaction with host MET, which subsequently allows dimerization of the host MET and subsequent host signaling; dimerization probably occurs via the convex surface of InlB. Interacts with host complement component 1 Q subcomponent-binding protein (C1QBP). Interacts in vitro with human intestinal mucin-2 (MUC2) but not with mucin-1. The cofactor is Ca(2+).

It localises to the secreted. The protein resides in the cell surface. Its subcellular location is the cell membrane. Mediates the entry of L.monocytogenes into normally non-phagocytic mammalian host cells. Its host receptor is hepatocyte growth factor receptor (HGF receptor, a tyrosine kinase, MET) which is tyrosine-phosphorylated in response to InlB in human, green monkey, mouse and dog cell lines. Downstream adapter proteins GAB1 and CBL are phosphorylated in response to InlB, which also causes cell colony scattering. InlB binding to mammalian cells is saturable and inhibited by EDTA; InlB-coated beads can be taken up by host cells. Complement component 1 Q subcomponent-binding protein (gC1q-R, C1QBP) might act as an InlB receptor, leading to activation of PI3-kinase in green monkey cells. Stimulation of Tyr-phosphorylation by InlB is antagonized by C1QBP, showing that potentiation of MET signaling via the GW domains is not mediated by C1QBP; the exact role of C1QBP remains to be determined. Stimulation of Tyr-phosphorylation of MET by InlB is potentiated by the InlB GW domains and glycosaminoglycans such as heparin; exogenously added InlB, or hepatocyte growth factor (HGF) will also substitute for bacterial InlB, suggesting InlB promotes bacterial invasion by mimicking the hormone HGF. May stimulate phosphatidylinositol 4,5-bisphosphate 3-kinase (PI3-kinase) in green monkey cells, has less effect in humans as PI3-kinase is constitutively and highly expressed in Caco cells. Binds heparin; C1QBP and heparin seem to bind to the GW domains. The sequence is that of Internalin B (inlB) from Listeria monocytogenes serotype 1/2a (strain EGD / Mackaness).